We begin with the raw amino-acid sequence, 318 residues long: Ribosomal RNA small subunit methyltransferase H (318 aa).

S-adenosyl-L-methionine is bound by residues 34-36 (GGY), Asp52, Phe79, Asp100, and Gln107. Residues 286-318 (GPAPDEARANPRARSAKLRAAARTAAPAWETVS) form a disordered region. A compositionally biased stretch (low complexity) spans 303 to 318 (LRAAARTAAPAWETVS).

Belongs to the methyltransferase superfamily. RsmH family.

Its subcellular location is the cytoplasm. It catalyses the reaction cytidine(1402) in 16S rRNA + S-adenosyl-L-methionine = N(4)-methylcytidine(1402) in 16S rRNA + S-adenosyl-L-homocysteine + H(+). Its function is as follows. Specifically methylates the N4 position of cytidine in position 1402 (C1402) of 16S rRNA. The protein is Ribosomal RNA small subunit methyltransferase H of Paramagnetospirillum magneticum (strain ATCC 700264 / AMB-1) (Magnetospirillum magneticum).